An 897-amino-acid chain; its full sequence is MNAMSTLPVPRDRTFPSSEGATPMMQQFLELRAQAPADALLFYRMGDFYELFFDDAVRASAALDIALTKRGEHQGEPISMCGVPAATAEAYLARLIKAGFKVAVGEQMEDPKTAKARGGSKAVVRRAITRVVTPGTLTEDSLLDPRVSNRIAALAQLVTGEAALAWADVSTGDFRVSPVATENLAAEIAAMSPAELLVEERGFAEAAMLAPRSTLTPLPKAKFDPSSAERQLKDQFRVQELTAFGNFTKAECAALGALLDYLSLSQAGAPAKLAPPRQVAAGACLAIDPATRASLEIERTLSGSRQGSLLDAIDRTVTAPGARKLAERLARPLTNVAEIEARLDAIAWFERARPERRDLRDRLRQAGDAERALSRLLLGRGGPRDLKSLAAALQEGEIIASRLLDRTLDTPPTLISEGLEALVLGDKPELAELIAELERAIVDEPPLLARDGGFIAEGWQVELDELRQLRDASRRVVAGLQQTYAEAVGVSALKIKHNNVLGYFVEVTAKHGDALMGDDRFIHRQTMANAIRFSTTELAELEAKIASAGDRALAMEIDAFAGLRDRVEAQADLIRGAARALAEFDVAASLAEWAEDSEAARPVMSQDSVFHIEGGRHPVVERALAKAGDGRFTPNDCHLDGAGEEAKRLTFVTGPNMAGKSTFLRQNALILMLAQAGCYVPARAARIGVADRLYSRVGAADDLARGRSTFMAEMIETAAILNQATARSFVILDEIGRGTATFDGLSIAWAAAEHLHAVNGCRALFATHYHELTRLADDLDAAGNVSLKAREWKGELVFLHEVGSGAADRSYGIEVARRAGLPRVSVKRAQAILARLEADGAPAAALTDLPLFALSEPEPEPVISEVETRLGEIDPDALSPREALEVLYALKAMTKKT.

Residue 654–661 (GPNMAGKS) participates in ATP binding.

Belongs to the DNA mismatch repair MutS family.

Its function is as follows. This protein is involved in the repair of mismatches in DNA. It is possible that it carries out the mismatch recognition step. This protein has a weak ATPase activity. The protein is DNA mismatch repair protein MutS of Maricaulis maris (strain MCS10) (Caulobacter maris).